The chain runs to 212 residues: Ribonuclease HII (212 aa).

The region spanning 20 to 209 (TCIVGVDEVG…VHNILYQEAS (190 aa)) is the RNase H type-2 domain. A divalent metal cation-binding residues include Asp26, Glu27, and Asp117.

It belongs to the RNase HII family. The cofactor is Mn(2+). Mg(2+) is required as a cofactor.

The protein localises to the cytoplasm. The enzyme catalyses Endonucleolytic cleavage to 5'-phosphomonoester.. Its function is as follows. Endonuclease that specifically degrades the RNA of RNA-DNA hybrids. The polypeptide is Ribonuclease HII (Cereibacter sphaeroides (strain ATCC 17025 / ATH 2.4.3) (Rhodobacter sphaeroides)).